The primary structure comprises 158 residues: RNA pyrophosphohydrolase (158 aa).

The Nudix hydrolase domain occupies G6 to K149. The Nudix box signature appears at G38–G59.

The protein belongs to the Nudix hydrolase family. RppH subfamily. It depends on a divalent metal cation as a cofactor.

In terms of biological role, accelerates the degradation of transcripts by removing pyrophosphate from the 5'-end of triphosphorylated RNA, leading to a more labile monophosphorylated state that can stimulate subsequent ribonuclease cleavage. This chain is RNA pyrophosphohydrolase, found in Blochmanniella floridana.